We begin with the raw amino-acid sequence, 139 residues long: UPF0251 protein Csac_0224 (139 aa).

It belongs to the UPF0251 family.

This is UPF0251 protein Csac_0224 from Caldicellulosiruptor saccharolyticus (strain ATCC 43494 / DSM 8903 / Tp8T 6331).